The following is a 184-amino-acid chain: PLASMODESMATA CALLOSE-BINDING PROTEIN 3 (184 aa).

The N-terminal stretch at M1 to G19 is a signal peptide. Residues C22 and C84 are joined by a disulfide bond. The segment at S109 to I146 is disordered. A compositionally biased stretch (low complexity) spans T113–S139. The GPI-anchor amidated serine moiety is linked to residue S158. Positions F159–S184 are cleaved as a propeptide — removed in mature form.

In terms of processing, contains two additional disulfide bonds. In terms of tissue distribution, expressed in the shoot apical region and in young leaves but also detected in the laminar and vasculature of mature leaves.

The protein localises to the cell membrane. Its subcellular location is the cell junction. It is found in the plasmodesma. The chain is PLASMODESMATA CALLOSE-BINDING PROTEIN 3 (PDCB3) from Arabidopsis thaliana (Mouse-ear cress).